Here is an 81-residue protein sequence, read N- to C-terminus: Trefoil factor 1 (81 aa).

An N-terminal signal peptide occupies residues 1–23 (MEHRVIYVLVLVCALTLSSLAQG). Residues 26-69 (ETCTVAPHHRDNCGSPGITPSQCKDKGCCFDNTVRGVPWCYYPV) enclose the P-type domain. Disulfide bonds link cysteine 28/cysteine 54, cysteine 38/cysteine 53, and cysteine 48/cysteine 65.

It is found in the secreted. Its function is as follows. Stabilizer of the mucous gel overlying the gastrointestinal mucosa that provides a physical barrier against various noxious agents. This chain is Trefoil factor 1 (TFF1), found in Canis lupus familiaris (Dog).